The chain runs to 505 residues: Glycerol kinase (505 aa).

Thr15 contacts ADP. 3 residues coordinate ATP: Thr15, Thr16, and Ser17. Residue Thr15 coordinates sn-glycerol 3-phosphate. Arg19 contacts ADP. 4 residues coordinate sn-glycerol 3-phosphate: Arg85, Glu86, Tyr136, and Asp249. Glycerol-binding residues include Arg85, Glu86, Tyr136, Asp249, and Gln250. Residues Thr271 and Gly314 each coordinate ADP. ATP is bound by residues Thr271, Gly314, Gln318, and Gly415. ADP is bound by residues Gly415 and Asn419.

Belongs to the FGGY kinase family.

The enzyme catalyses glycerol + ATP = sn-glycerol 3-phosphate + ADP + H(+). It participates in polyol metabolism; glycerol degradation via glycerol kinase pathway; sn-glycerol 3-phosphate from glycerol: step 1/1. With respect to regulation, inhibited by fructose 1,6-bisphosphate (FBP). Key enzyme in the regulation of glycerol uptake and metabolism. Catalyzes the phosphorylation of glycerol to yield sn-glycerol 3-phosphate. This is Glycerol kinase from Mycoplasma mycoides subsp. mycoides SC (strain CCUG 32753 / NCTC 10114 / PG1).